Here is a 228-residue protein sequence, read N- to C-terminus: Response regulator SaeR (228 aa).

One can recognise a Response regulatory domain in the interval histidine 3–leucine 116. 4-aspartylphosphate is present on aspartate 51. A DNA-binding region (ompR/PhoB-type) is located at residues valine 127–arginine 226.

In terms of processing, phosphorylated by SaeS.

It is found in the cytoplasm. Its function is as follows. Member of the two-component regulatory system SaeR/SaeS involved in the regulation of staphylococcal virulence factors in a strain-dependent fashion. Probably functions as a transcriptional regulator via a specific DNA-binding domain, recognizing motifs near the promoter sequences of target genes. The protein is Response regulator SaeR (saeR) of Staphylococcus aureus (strain USA300).